A 380-amino-acid polypeptide reads, in one-letter code: Cytochrome b (380 aa).

A run of 4 helical transmembrane segments spans residues 34-54, 78-99, 114-134, and 179-199; these read FGSL…LLAM, WLIR…FLHI, WNTG…GYVL, and FFAL…THLM. Residues H84 and H98 each contribute to the heme b site. The heme b site is built by H183 and H197. Position 202 (H202) interacts with a ubiquinone. 4 helical membrane passes run 227–247, 289–309, 321–341, and 348–368; these read LKDI…ALFS, LGGV…PFLH, LSQA…WVGS, and FIII…ILFP.

Belongs to the cytochrome b family. As to quaternary structure, the cytochrome bc1 complex contains 11 subunits: 3 respiratory subunits (MT-CYB, CYC1 and UQCRFS1), 2 core proteins (UQCRC1 and UQCRC2) and 6 low-molecular weight proteins (UQCRH/QCR6, UQCRB/QCR7, UQCRQ/QCR8, UQCR10/QCR9, UQCR11/QCR10 and a cleavage product of UQCRFS1). This cytochrome bc1 complex then forms a dimer. It depends on heme b as a cofactor.

It is found in the mitochondrion inner membrane. In terms of biological role, component of the ubiquinol-cytochrome c reductase complex (complex III or cytochrome b-c1 complex) that is part of the mitochondrial respiratory chain. The b-c1 complex mediates electron transfer from ubiquinol to cytochrome c. Contributes to the generation of a proton gradient across the mitochondrial membrane that is then used for ATP synthesis. In Syrmaticus reevesii (Reeves's pheasant), this protein is Cytochrome b (MT-CYB).